A 182-amino-acid chain; its full sequence is Ribosome-recycling factor (182 aa).

Residues 136 to 158 (IKKQEKEGDLSEDQSRDEQDQVQ) form a disordered region.

This sequence belongs to the RRF family.

The protein localises to the cytoplasm. Functionally, responsible for the release of ribosomes from messenger RNA at the termination of protein biosynthesis. May increase the efficiency of translation by recycling ribosomes from one round of translation to another. This chain is Ribosome-recycling factor, found in Synechococcus sp. (strain CC9311).